We begin with the raw amino-acid sequence, 368 residues long: WD repeat-containing protein RUP2 (368 aa).

WD repeat units lie at residues 38–77 (SASD…RNNA), 97–138 (CTPA…PVFE), 141–184 (EHGG…EESV), 192–232 (ICRS…DPAL), 236–276 (GHTK…RTYE), 279–318 (VNNR…PVWV), and 330–368 (SDKR…KRKP).

In terms of assembly, interacts with UVR8.

The protein localises to the nucleus. It localises to the cytoplasm. It is found in the cytosol. In terms of biological role, functions in association with RUP1 as repressor of UV-B-induced photomorphogenesis mediated by UVR8 and HY5. Plays a crucial negative feedback regulatory role downstream of UVR8-COP1 to inhibit UVR8 function, balance UV-B-specific responses and ensure normal plant growth. Is involved in the regulation of photoperiodic flowering and vegetative development. May act as negative regulator of photoperiodic flowering by suppressing flowering through the action of CONSTANS (CO) and FLOWERING LOCUS T (FT). This is WD repeat-containing protein RUP2 (RUP2) from Arabidopsis thaliana (Mouse-ear cress).